A 506-amino-acid chain; its full sequence is Steroid (22S)-hydroxylase (506 aa).

The helical transmembrane segment at 12 to 32 threads the bilayer; it reads LLFFLPFILLALLTFYTTTVA. Heme is bound at residue Cys-449.

It belongs to the cytochrome P450 family. The cofactor is heme. In terms of tissue distribution, highly expressed in roots and leaf blades. Expressed in shoot apex, stems, leaf sheaths, inflorescences and flowers.

The protein localises to the membrane. It catalyses the reaction a C28-steroid + reduced [NADPH--hemoprotein reductase] + O2 = a (22S)-22-hydroxy C28-steroid + oxidized [NADPH--hemoprotein reductase] + H2O + H(+). The enzyme catalyses campesterol + reduced [NADPH--hemoprotein reductase] + O2 = (22S)-22-hydroxycampesterol + oxidized [NADPH--hemoprotein reductase] + H2O + H(+). The catalysed reaction is campestanol + reduced [NADPH--hemoprotein reductase] + O2 = 6-deoxycathasterone + oxidized [NADPH--hemoprotein reductase] + H2O + H(+). Its pathway is plant hormone biosynthesis; brassinosteroid biosynthesis. Its function is as follows. Catalyzes the C22-alpha-hydroxylation step in brassinosteroid biosynthesis, which is the rate-limiting step in this biosynthetic pathway. Catalyzes the conversion of campesterol (CR) to (22S)-22-hydroxycampesterol (22-OHCR, 22-hydroxyCR) and of campestanol (CN) to 6-deoxycathasterone (6-deoxoCT). Required for auxin responses involved in the regulation of epidermal cells length of the lamina joint. The protein is Steroid (22S)-hydroxylase of Oryza sativa subsp. japonica (Rice).